The chain runs to 206 residues: UPF0328 protein ECU01_0050/ECU01_1560 (206 aa).

Disordered stretches follow at residues 1 to 153 and 179 to 206; these read MPRP…HSHT and GRLH…LATL. A compositionally biased stretch (basic and acidic residues) spans 74–96; that stretch reads HTEGCHTHEANPEPNTKHTETES. Composition is skewed to polar residues over residues 97–120 and 132–148; these read PKPQ…SQNT and SRPS…QSPH.

Belongs to the UPF0328 family.

The sequence is that of UPF0328 protein ECU01_0050/ECU01_1560 from Encephalitozoon cuniculi (strain GB-M1) (Microsporidian parasite).